Here is a 221-residue protein sequence, read N- to C-terminus: Putative hemin import ATP-binding protein HrtA (221 aa).

Residues 3–221 (LQLKHITKTF…IEIQDGKIEL (219 aa)) form the ABC transporter domain. 39-46 (GASGSGKS) is a binding site for ATP.

It belongs to the ABC transporter superfamily. HrtA family. The complex is composed of two ATP-binding proteins (HrtA), two transmembrane proteins (HrtB) and a solute-binding protein.

The protein localises to the cell membrane. Functionally, part of the ABC transporter complex hrt involved in hemin import. Responsible for energy coupling to the transport system. This chain is Putative hemin import ATP-binding protein HrtA (hrtA), found in Staphylococcus haemolyticus (strain JCSC1435).